A 1020-amino-acid polypeptide reads, in one-letter code: C protein alpha-antigen (1020 aa).

Residues M1–V41 form the signal peptide. The interval V227–P964 is 9 X 82 AA tandem repeats. Disordered regions lie at residues D261–D281, P306–V330, P342–D363, P388–D445, P470–V494, P506–D527, P552–V576, P588–H610, P634–V658, P670–H692, P716–V740, P752–H774, P798–V822, P834–H856, P880–V904, and P962–A989. Basic and acidic residues predominate over residues D272–D281. Positions G320–P329 are enriched in polar residues. Basic and acidic residues predominate over residues D354–D363. Positions G402–P411 are enriched in polar residues. Over residues D436 to D445 the composition is skewed to basic and acidic residues. Residues G484 to P493 show a composition bias toward polar residues. A compositionally biased stretch (basic and acidic residues) spans D518 to D527. The segment covering G566–P575 has biased composition (polar residues). The span at D600–H610 shows a compositional bias: basic and acidic residues. Residues G648 to P657 are compositionally biased toward polar residues. Basic and acidic residues predominate over residues D682–H692. Positions G730–P739 are enriched in polar residues. The segment covering D764–H774 has biased composition (basic and acidic residues). The span at G812–P821 shows a compositional bias: polar residues. Positions D846–H856 are enriched in basic and acidic residues. A compositionally biased stretch (polar residues) spans G894–P903. The LPXTG sorting signal signature appears at L987–G991. Pentaglycyl murein peptidoglycan amidated threonine is present on T990. Positions G991–D1020 are cleaved as a propeptide — removed by sortase.

It localises to the secreted. The protein resides in the cell wall. Its function is as follows. May play a role in both virulence and immunity. This chain is C protein alpha-antigen (bca), found in Streptococcus agalactiae serotype Ia (strain ATCC 27591 / A909 / CDC SS700).